Consider the following 1347-residue polypeptide: Spermatogenesis-associated protein 31A1 (1347 aa).

Residues 23 to 43 (PWVLDIFLTLVFALGFFFLLL) traverse the membrane as a helical segment. Disordered regions lie at residues 55–89 (PSPS…ECPR), 106–235 (GPHL…STLI), 373–397 (EQDT…GPQK), 628–658 (DESP…EAQK), 899–955 (PRGI…REAV), and 1085–1160 (HEEP…PPSV). The segment covering 60-82 (GKRKCPVGRRRRPRGRMKNHSLR) has biased composition (basic residues). A compositionally biased stretch (polar residues) spans 165–178 (LASTPSPGPMTTSV). Over residues 198–222 (PEPPALFPHPPHTPDPLACSPPPPK) the composition is skewed to pro residues. Composition is skewed to polar residues over residues 631-651 (PGTS…STGE) and 927-948 (LTYS…SSKA). 2 stretches are compositionally biased toward basic and acidic residues: residues 1108–1127 (HKSE…RLEG) and 1137–1146 (RKTEDTHQDE).

Belongs to the SPATA31 family.

Its subcellular location is the membrane. Its function is as follows. May play a role in spermatogenesis. The sequence is that of Spermatogenesis-associated protein 31A1 from Homo sapiens (Human).